The primary structure comprises 201 residues: MTDISAVAGQPALVRNELNLVWLDMEMTGLDPDTDRIIEIAVVVTNSTLDIAVEGPVLAIHQSDETLAKMDDWNKNTHGRSGLIDRVRASSVTEADAAAQIAAFLAEHVPPGKSPMCGNSICQDRRFMARWMPELERFFHYRNLDVSTLKELCRRWQPAIYKGFQKRAMHTALADIHESIDELKYYRERFLIPAAPAGETA.

An Exonuclease domain is found at 20–183 (LVWLDMEMTG…ADIHESIDEL (164 aa)). The active site involves Y141.

Belongs to the oligoribonuclease family.

The protein localises to the cytoplasm. Functionally, 3'-to-5' exoribonuclease specific for small oligoribonucleotides. The protein is Oligoribonuclease of Burkholderia mallei (strain NCTC 10229).